The chain runs to 318 residues: Putative olfactory receptor 2W6 (318 aa).

Topologically, residues M1–L31 are extracellular. A helical transmembrane segment spans residues I32 to V52. The Cytoplasmic segment spans residues L53–T63. The helical transmembrane segment at P64–I84 threads the bilayer. Residues P85–C103 are Extracellular-facing. An intrachain disulfide couples C103 to C185. The chain crosses the membrane as a helical span at residues A104 to M124. The Cytoplasmic portion of the chain corresponds to A125 to R145. A helical membrane pass occupies residues L146 to A166. Topologically, residues P167–E202 are extracellular. Residues A203–S223 traverse the membrane as a helical segment. Residues Y224–N245 lie on the Cytoplasmic side of the membrane. The chain crosses the membrane as a helical span at residues T246–L266. Residues Q267 to G277 are Extracellular-facing. A helical transmembrane segment spans residues K278–L298. The Cytoplasmic portion of the chain corresponds to R299–I318.

Belongs to the G-protein coupled receptor 1 family.

The protein localises to the cell membrane. In terms of biological role, odorant receptor. The chain is Putative olfactory receptor 2W6 (OR2W6P) from Homo sapiens (Human).